Here is a 744-residue protein sequence, read N- to C-terminus: Probable ubiquitin carboxyl-terminal hydrolase MINDY-4 (744 aa).

Phosphoserine occurs at positions 143, 220, and 224. Residues 211–358 (GMMAGPVASS…QLVSDRTDDK (148 aa)) form a disordered region. The span at 265–277 (VPDSSSDSVSRSP) shows a compositional bias: low complexity. Residues 290–299 (NVTSSSQGLS) are compositionally biased toward polar residues. S295 carries the post-translational modification Phosphoserine. Over residues 300-310 (QRDRPRLRSVS) the composition is skewed to basic and acidic residues. C443 acts as the Nucleophile in catalysis. H664 serves as the catalytic Proton acceptor.

The protein belongs to the MINDY deubiquitinase family. FAM188 subfamily.

It carries out the reaction Thiol-dependent hydrolysis of ester, thioester, amide, peptide and isopeptide bonds formed by the C-terminal Gly of ubiquitin (a 76-residue protein attached to proteins as an intracellular targeting signal).. Functionally, probable hydrolase that can remove 'Lys-48'-linked conjugated ubiquitin from proteins. The protein is Probable ubiquitin carboxyl-terminal hydrolase MINDY-4 (Mindy4) of Mus musculus (Mouse).